A 290-amino-acid polypeptide reads, in one-letter code: Translin-associated protein X (290 aa).

The tract at residues 1–32 (MSNKEGSGGFRKRKHDNFPHNQRREGKDVNSS) is disordered. Basic and acidic residues predominate over residues 16–28 (DNFPHNQRREGKD). Positions 73–208 (LLHRITSAPD…MRMCINSVGN (136 aa)) are interaction with C1D. Mg(2+) contacts are provided by E129 and E197. A Glycyl lysine isopeptide (Lys-Gly) (interchain with G-Cter in SUMO2) cross-link involves residue K279.

It belongs to the translin family. As to quaternary structure, ring-shaped heterooctamer of six TSN and two TSNAX subunits. Interacts with GOLGA3, TSNAXIP1, SUN1 and AKAP9. Interacts with the homodimeric form of C1D following gamma-radiation. Interacts with TSN and C1D in a mutually exclusive manner. Sumoylated with SUMO1.

The protein resides in the cytoplasm. It is found in the perinuclear region. Its subcellular location is the golgi apparatus. It localises to the nucleus. Its function is as follows. Acts in combination with TSN as an endonuclease involved in the activation of the RNA-induced silencing complex (RISC). Possible role in spermatogenesis. The protein is Translin-associated protein X (TSNAX) of Pongo abelii (Sumatran orangutan).